The following is a 289-amino-acid chain: Carbonyl reductase [NADPH] 1 (289 aa).

Ser-2 is modified (N-acetylserine). Residue Ser-2 is modified to Phosphoserine. Residues 10-34, 63-64, and Asn-90 contribute to the NADP(+) site; these read VTGA…GDVV and DI. Glutathione-binding positions include 95–97 and Gln-106; that span reads FQL. Ser-140 serves as a coordination point for substrate. 193–194 is a glutathione binding site; that stretch reads TY. Residue Tyr-194 is the Proton acceptor of the active site. NADP(+)-binding positions include 194–198 and 231–233; these read YGVTK and VRT. Lys-239 carries the post-translational modification N6-1-carboxyethyl lysine.

The protein belongs to the short-chain dehydrogenases/reductases (SDR) family. In terms of assembly, monomer. In terms of tissue distribution, expressed in kidney (at protein level).

The protein localises to the cytoplasm. The catalysed reaction is a secondary alcohol + NADP(+) = a ketone + NADPH + H(+). The enzyme catalyses prostaglandin E1 + NADP(+) = 15-oxoprostaglandin E1 + NADPH + H(+). It carries out the reaction prostaglandin F2alpha + NADP(+) = prostaglandin E2 + NADPH + H(+). It catalyses the reaction prostaglandin D2 + NADP(+) = 15-oxoprostaglandin D2 + NADPH + H(+). The catalysed reaction is prostaglandin E2 + NADP(+) = 15-oxoprostaglandin E2 + NADPH + H(+). The enzyme catalyses prostaglandin F2alpha + NADP(+) = 15-oxoprostaglandin F2alpha + NADPH + H(+). It carries out the reaction menadione + NADPH + H(+) = menadiol + NADP(+). It catalyses the reaction daunorubicin + NADPH + H(+) = 13-dihydrodaunorubicin + NADP(+). The catalysed reaction is S-nitrosoglutathione + NADPH + H(+) = S-(hydroxysulfenamide)glutathione + NADP(+). The enzyme catalyses a primary alcohol + NADP(+) = an aldehyde + NADPH + H(+). It carries out the reaction cortisol + NADPH + H(+) = 20beta-dihydrocortisol + NADP(+). It catalyses the reaction corticosterone + NADPH + H(+) = 20beta-dihydrocorticosterone + NADP(+). NADPH-dependent reductase with broad substrate specificity. Catalyzes the reduction of a wide variety of carbonyl compounds including quinones, prostaglandins, menadione, plus various xenobiotics. Catalyzes the reduction of the antitumor anthracyclines doxorubicin and daunorubicin to the cardiotoxic compounds doxorubicinol and daunorubicinol. Can convert prostaglandin E2 to prostaglandin F2-alpha. Can bind glutathione, which explains its higher affinity for glutathione-conjugated substrates. Catalyzes the reduction of S-nitrosoglutathione. In addition, participates in the glucocorticoid metabolism by catalyzing the NADPH-dependent cortisol/corticosterone into 20beta-dihydrocortisol (20b-DHF) or 20beta-corticosterone (20b-DHB), which are weak agonists of NR3C1 and NR3C2 in adipose tissue. In Sus scrofa (Pig), this protein is Carbonyl reductase [NADPH] 1.